The sequence spans 207 residues: Large ribosomal subunit protein uL4 (207 aa).

The segment at 62–85 (KKPFKQKGTGQARQGCRRAPQYPG) is disordered.

This sequence belongs to the universal ribosomal protein uL4 family. In terms of assembly, part of the 50S ribosomal subunit.

One of the primary rRNA binding proteins, this protein initially binds near the 5'-end of the 23S rRNA. It is important during the early stages of 50S assembly. It makes multiple contacts with different domains of the 23S rRNA in the assembled 50S subunit and ribosome. Functionally, forms part of the polypeptide exit tunnel. The protein is Large ribosomal subunit protein uL4 of Geobacter sp. (strain M21).